The sequence spans 498 residues: NADP-dependent glyceraldehyde-3-phosphate dehydrogenase (498 aa).

Substrate is bound by residues Arg118 and 171–172 (NY). Residues Lys194, Thr197, and Asp232 each coordinate NADP(+). Residue 247–251 (GGDTG) participates in NAD(+) binding. The Proton acceptor role is filled by Glu266. 299-301 (RCT) is a binding site for substrate. Cys300 functions as the Nucleophile in the catalytic mechanism. Position 393 (Glu393) interacts with NADP(+). Position 453 (Arg453) interacts with substrate.

The protein belongs to the aldehyde dehydrogenase family.

Its subcellular location is the cytoplasm. The enzyme catalyses D-glyceraldehyde 3-phosphate + NADP(+) + H2O = (2R)-3-phosphoglycerate + NADPH + 2 H(+). Functionally, important as a means of generating NADPH for biosynthetic reactions. This chain is NADP-dependent glyceraldehyde-3-phosphate dehydrogenase (GPN1), found in Zea mays (Maize).